Here is an 877-residue protein sequence, read N- to C-terminus: Phosphoenolpyruvate carboxylase (877 aa).

Residues His137 and Lys542 contribute to the active site.

The protein belongs to the PEPCase type 1 family. It depends on Mg(2+) as a cofactor.

It catalyses the reaction oxaloacetate + phosphate = phosphoenolpyruvate + hydrogencarbonate. Functionally, forms oxaloacetate, a four-carbon dicarboxylic acid source for the tricarboxylic acid cycle. The sequence is that of Phosphoenolpyruvate carboxylase from Tolumonas auensis (strain DSM 9187 / NBRC 110442 / TA 4).